A 622-amino-acid polypeptide reads, in one-letter code: Polyprotein p69 (622 aa).

The Peptidase C7 domain maps to 1-248 (MSCLRKPSQS…AARDPLARIG (248 aa)). Residues C162 and H215 each act as for papain-like protease p29 activity in the active site.

In terms of processing, autocatalytically processed.

Functionally, P40 protein is involved in reduction of conidiation of the host. Not necessary for replication. Also involved in reduction of orange pigmentation of the host. Cysteine protease of the peptidase family C7 that contributes to hypovirulence-associated traits like the reduction in conidiation and laccase activity, but not to virulence attenuation. Acts as a suppressor of RNA-mediated gene silencing, also known as post-transcriptional gene silencing (PTGS), a mechanism of viral defense that limits the accumulation of viral RNAs. Enhances viral dsRNA accumulation and virus transmission. Also involved in the reduction in orange pigmentation of the host, an effect independent of the intrinsic protease activity. This Cryphonectria hypovirus 1 (strain Euro7) (CHV-1/Euro7) protein is Polyprotein p69.